Consider the following 276-residue polypeptide: Rhomboid protease GlpG (276 aa).

Transmembrane regions (helical) follow at residues 94–114 (GPVT…MSLI), 142–162 (IFMH…WYLG), 169–189 (LGSG…GYVQ), 192–212 (FSGP…GYVW), 229–249 (LIIF…GMSM), and 250–270 (ANGA…VDTL). Catalysis depends on S201, which acts as the Nucleophile. Residue H254 is part of the active site.

It belongs to the peptidase S54 family.

It localises to the cell inner membrane. The catalysed reaction is Cleaves type-1 transmembrane domains using a catalytic dyad composed of serine and histidine that are contributed by different transmembrane domains.. In terms of biological role, rhomboid-type serine protease that catalyzes intramembrane proteolysis. The chain is Rhomboid protease GlpG from Salmonella paratyphi A (strain ATCC 9150 / SARB42).